Here is a 465-residue protein sequence, read N- to C-terminus: Pancreatic triacylglycerol lipase (465 aa).

The signal sequence occupies residues 1–16 (MLPLWTLSLLLGAVAG). Cystine bridges form between cysteine 20-cysteine 26 and cysteine 107-cysteine 118. Serine 169 (nucleophile) is an active-site residue. A glycan (N-linked (GlcNAc...) asparagine) is linked at asparagine 183. Aspartate 193 functions as the Charge relay system in the catalytic mechanism. 4 residues coordinate Ca(2+): glutamate 204, arginine 207, aspartate 209, and aspartate 212. Cysteines 254 and 278 form a disulfide. Histidine 280 serves as the catalytic Charge relay system. Cystine bridges form between cysteine 302–cysteine 313, cysteine 316–cysteine 321, and cysteine 449–cysteine 465. The region spanning 355–465 (WRYKVSVTLS…EEVLLTLTPC (111 aa)) is the PLAT domain.

The protein belongs to the AB hydrolase superfamily. Lipase family. Forms a 1:1 stoichiometric complex with (pro)colipase/CLPS.

Its subcellular location is the secreted. It carries out the reaction a triacylglycerol + H2O = a diacylglycerol + a fatty acid + H(+). The catalysed reaction is 1,2,3-tributanoylglycerol + H2O = dibutanoylglycerol + butanoate + H(+). It catalyses the reaction 1,2,3-tri-(9Z-octadecenoyl)-glycerol + H2O = di-(9Z)-octadecenoylglycerol + (9Z)-octadecenoate + H(+). The enzyme catalyses all-trans-retinyl hexadecanoate + H2O = all-trans-retinol + hexadecanoate + H(+). It carries out the reaction 1,2-di-(9Z-octadecenoyl)-glycerol + H2O = (9Z-octadecenoyl)-glycerol + (9Z)-octadecenoate + H(+). Its activity is regulated as follows. Inhibited by bile salts, is reactivated by (pro)colipase/CLPS. Its function is as follows. Plays an important role in fat metabolism. It preferentially splits the esters of long-chain fatty acids at positions 1 and 3, producing mainly 2-monoacylglycerol and free fatty acids, and shows considerably higher activity against insoluble emulsified substrates than against soluble ones. The protein is Pancreatic triacylglycerol lipase of Homo sapiens (Human).